The primary structure comprises 1138 residues: Phosphatidylserine decarboxylase proenzyme 2 (1138 aa).

The C2 1 domain occupies 1 to 122 (MRIIKGRKRG…SNSGLSSHSH (122 aa)). Disordered stretches follow at residues 90–166 (TGAP…PGST), 269–305 (MRSSSSLPPPLEDMLSNSSAVSGNEIRREKPYSDTDL), and 413–448 (AVSENDITSVDDEESENQQESDEEFDIYNEDEREDS). Residues 98–121 (SRPRTTTANTSSSTLSNSGLSSHS) show a composition bias toward low complexity. A compositionally biased stretch (polar residues) spans 125-135 (RNLNVTSKGNQ). Positions 136–166 (TSTSINSVSSSATPAPSHSSSSLSTTGPGST) are enriched in low complexity. Basic and acidic residues predominate over residues 293 to 305 (EIRREKPYSDTDL). A compositionally biased stretch (acidic residues) spans 421–448 (SVDDEESENQQESDEEFDIYNEDEREDS). Positions 478 to 600 (RRAKSNFFIS…QQQQHENEWI (123 aa)) constitute a C2 2 domain. 3 residues coordinate Ca(2+): D571, S574, and D577. Residues D899, H956, and S1043 each act as charge relay system; for autoendoproteolytic cleavage activity in the active site. Residue S1043 is the Schiff-base intermediate with substrate; via pyruvic acid; for decarboxylase activity of the active site. At S1043 the chain carries Pyruvic acid (Ser); by autocatalysis.

It belongs to the phosphatidylserine decarboxylase family. PSD-B subfamily. Eukaryotic type II sub-subfamily. As to quaternary structure, heterodimer of a large membrane-associated beta subunit and a small pyruvoyl-containing alpha subunit. Interacts with pstB2/PDR17. This interaction may be a means to structurally tether the donor membrane (ER) harboring PstB2/PDR17 to acceptor membranes (Golgi/endosomes) harboring PSD2 during PtdSer transport to the site of PtdEtn synthesis. The cofactor is pyruvate. Ca(2+) is required as a cofactor. In terms of processing, is synthesized initially as an inactive proenzyme. Formation of the active enzyme involves a self-maturation process in which the active site pyruvoyl group is generated from an internal serine residue via an autocatalytic post-translational modification. Two non-identical subunits are generated from the proenzyme in this reaction, and the pyruvate is formed at the N-terminus of the alpha chain, which is derived from the carboxyl end of the proenzyme. The autoendoproteolytic cleavage occurs by a canonical serine protease mechanism, in which the side chain hydroxyl group of the serine supplies its oxygen atom to form the C-terminus of the beta chain, while the remainder of the serine residue undergoes an oxidative deamination to produce ammonia and the pyruvoyl prosthetic group on the alpha chain. During this reaction, the Ser that is part of the protease active site of the proenzyme becomes the pyruvoyl prosthetic group, which constitutes an essential element of the active site of the mature decarboxylase.

The protein resides in the golgi apparatus membrane. Its subcellular location is the endosome membrane. It carries out the reaction a 1,2-diacyl-sn-glycero-3-phospho-L-serine + H(+) = a 1,2-diacyl-sn-glycero-3-phosphoethanolamine + CO2. The protein operates within phospholipid metabolism; phosphatidylethanolamine biosynthesis; phosphatidylethanolamine from CDP-diacylglycerol: step 2/2. In terms of biological role, catalyzes the formation of phosphatidylethanolamine (PtdEtn) from phosphatidylserine (PtdSer). Plays a central role in phospholipid metabolism and in the interorganelle trafficking of phosphatidylserine. Phosphatidylethanolamine produced by PSD2 is insufficient to completely provide the PtdEtn pool required by mitochondria under respiratory conditions. PSD2 is also involved in the PtdSer transport step to the site of PtdEtn synthesis on the Golgi/endosome membranes. Required for normal heavy metal resistance. The protein is Phosphatidylserine decarboxylase proenzyme 2 of Saccharomyces cerevisiae (strain ATCC 204508 / S288c) (Baker's yeast).